Here is a 239-residue protein sequence, read N- to C-terminus: Large ribosomal subunit protein uL2 (239 aa).

2 disordered regions span residues 1–28 and 199–239; these read MGKR…VGPA and SHPH…RRKG. Positions 225–239 are enriched in basic residues; that stretch reads KVGHIAARRTGRRKG.

It belongs to the universal ribosomal protein uL2 family. Part of the 50S ribosomal subunit. Forms a bridge to the 30S subunit in the 70S ribosome.

One of the primary rRNA binding proteins. Required for association of the 30S and 50S subunits to form the 70S ribosome, for tRNA binding and peptide bond formation. It has been suggested to have peptidyltransferase activity; this is somewhat controversial. Makes several contacts with the 16S rRNA in the 70S ribosome. The polypeptide is Large ribosomal subunit protein uL2 (Staphylothermus marinus (strain ATCC 43588 / DSM 3639 / JCM 9404 / F1)).